We begin with the raw amino-acid sequence, 1057 residues long: Hemophilin receptor (1057 aa).

One can recognise a TBDR plug domain in the interval lysine 168–leucine 285. Residues serine 296–phenylalanine 1057 form the TBDR beta-barrel domain.

This sequence belongs to the TonB-dependent receptor family.

The protein localises to the cell outer membrane. Functionally, part of a high affinity heme acquisition system. Functions as a gateway for heme entry into the bacterial cell, enabling growth on hemoprotein sources. Can acquire heme directly from hemoprotein reservoirs, however, HphA likely enhances the efficiency of this process by delivering heme to HphR. Is essential for virulence, bacterial dissemination and growth in the blood. The sequence is that of Hemophilin receptor from Acinetobacter baumannii.